The following is a 71-amino-acid chain: ATP synthase subunit c (71 aa).

2 helical membrane passes run 4–24 (IAAAIAIMGAAIGAGYGNGQV) and 47–67 (FIGVALVEAVPILGVVIALIL).

The protein belongs to the ATPase C chain family. F-type ATPases have 2 components, F(1) - the catalytic core - and F(0) - the membrane proton channel. F(1) has five subunits: alpha(3), beta(3), gamma(1), delta(1), epsilon(1). F(0) has three main subunits: a(1), b(2) and c(10-14). The alpha and beta chains form an alternating ring which encloses part of the gamma chain. F(1) is attached to F(0) by a central stalk formed by the gamma and epsilon chains, while a peripheral stalk is formed by the delta and b chains.

The protein resides in the cell membrane. F(1)F(0) ATP synthase produces ATP from ADP in the presence of a proton or sodium gradient. F-type ATPases consist of two structural domains, F(1) containing the extramembraneous catalytic core and F(0) containing the membrane proton channel, linked together by a central stalk and a peripheral stalk. During catalysis, ATP synthesis in the catalytic domain of F(1) is coupled via a rotary mechanism of the central stalk subunits to proton translocation. Functionally, key component of the F(0) channel; it plays a direct role in translocation across the membrane. A homomeric c-ring of between 10-14 subunits forms the central stalk rotor element with the F(1) delta and epsilon subunits. In Enterococcus hirae (strain ATCC 9790 / DSM 20160 / JCM 8729 / LMG 6399 / NBRC 3181 / NCIMB 6459 / NCDO 1258 / NCTC 12367 / WDCM 00089 / R), this protein is ATP synthase subunit c.